A 249-amino-acid polypeptide reads, in one-letter code: Cis-4-hydroxycyclohexanecarboxylate dehydrogenase (249 aa).

NAD(+) is bound by residues aspartate 38, aspartate 63, valine 64, asparagine 90, tyrosine 156, lysine 160, alanine 189, and threonine 191. Tyrosine 156 acts as the Proton acceptor in catalysis.

It belongs to the short-chain dehydrogenases/reductases (SDR) family. Homotetramer.

The enzyme catalyses cis-4-hydroxycyclohexane-1-carboxylate + NAD(+) = 4-oxocyclohexane-1-carboxylate + NADH + H(+). Functionally, dehydrogenase involved in a cyclohexanecarboxylate (CHCA) degradation pathway. Catalyzes the NAD(+)-dependent dehydrogenation of cis-4-hydroxycyclohexanecarboxylate (cis-4-hydroxyCHCA) to form 4-oxocyclohexanecarboxylate (4-oxoCHCA). Is highly specific for the cis-4-hydroxy derivative and shows only weak activity with trans-4-hydroxyCHCA. Cannot use NADP(+). This is Cis-4-hydroxycyclohexanecarboxylate dehydrogenase from Sinomonas cyclohexanicum (Corynebacterium cyclohexanicum).